The primary structure comprises 239 residues: RNA polymerase sigma factor FliA (239 aa).

Positions 16 to 88 (LWQRYVPLVR…MLDELRSRDW (73 aa)) are sigma-70 factor domain-2. The Interaction with polymerase core subunit RpoC motif lies at 43 to 46 (DLLQ). Positions 96–166 (NAREVAQAIG…IELVTDDHQR (71 aa)) are sigma-70 factor domain-3. The sigma-70 factor domain-4 stretch occupies residues 185 to 233 (AIETLPEREKLVLTLYYQEELNLKEIGAVLEVGESRVSQLHSQAIKRLR). Residues 207 to 226 (LKEIGAVLEVGESRVSQLHS) constitute a DNA-binding region (H-T-H motif).

It belongs to the sigma-70 factor family. FliA subfamily.

The protein localises to the cytoplasm. Sigma factors are initiation factors that promote the attachment of RNA polymerase to specific initiation sites and are then released. This sigma factor controls the expression of flagella-related genes. The polypeptide is RNA polymerase sigma factor FliA (Escherichia coli O157:H7).